Consider the following 130-residue polypeptide: MAKRKAVRKKVVKKNIARGICHISASFNNTLVTITDEMGNMIAWSSAGSLGFKGSKKSTPFAAQAAVEDAVAKAQVHGVKELGIKVQGPGSGRETATKAVGGIEGIRVTFMKDVTPLPHNGCRAPKRRRV.

The protein belongs to the universal ribosomal protein uS11 family. As to quaternary structure, part of the 30S ribosomal subunit. Interacts with proteins S7 and S18. Binds to IF-3.

Functionally, located on the platform of the 30S subunit, it bridges several disparate RNA helices of the 16S rRNA. Forms part of the Shine-Dalgarno cleft in the 70S ribosome. This is Small ribosomal subunit protein uS11 from Sulfurimonas denitrificans (strain ATCC 33889 / DSM 1251) (Thiomicrospira denitrificans (strain ATCC 33889 / DSM 1251)).